We begin with the raw amino-acid sequence, 654 residues long: Tumor necrosis factor alpha-induced protein 2 (654 aa).

2 disordered regions span residues 1-38 (MSEA…KKSK) and 50-78 (GKKK…PPPT). A compositionally biased stretch (basic residues) spans 28 to 38 (KKKKEKKKKSK).

It belongs to the SEC6 family.

May play a role as a mediator of inflammation and angiogenesis. The sequence is that of Tumor necrosis factor alpha-induced protein 2 (TNFAIP2) from Homo sapiens (Human).